A 318-amino-acid chain; its full sequence is ADP-L-glycero-D-manno-heptose-6-epimerase (318 aa).

NADP(+) is bound by residues 10–11 (FI), 31–32 (DD), K38, K53, 80–84 (EGACS), and N97. Residue Y144 is the Proton acceptor of the active site. An NADP(+)-binding site is contributed by K148. N173 contacts substrate. 2 residues coordinate NADP(+): V174 and K182. K182 acts as the Proton acceptor in catalysis. Substrate is bound by residues K184, H191, 205-208 (FGAW), R218, and Y282.

It belongs to the NAD(P)-dependent epimerase/dehydratase family. HldD subfamily. Homopentamer. NADP(+) serves as cofactor.

The enzyme catalyses ADP-D-glycero-beta-D-manno-heptose = ADP-L-glycero-beta-D-manno-heptose. It functions in the pathway nucleotide-sugar biosynthesis; ADP-L-glycero-beta-D-manno-heptose biosynthesis; ADP-L-glycero-beta-D-manno-heptose from D-glycero-beta-D-manno-heptose 7-phosphate: step 4/4. Its function is as follows. Catalyzes the interconversion between ADP-D-glycero-beta-D-manno-heptose and ADP-L-glycero-beta-D-manno-heptose via an epimerization at carbon 6 of the heptose. The chain is ADP-L-glycero-D-manno-heptose-6-epimerase from Chromohalobacter salexigens (strain ATCC BAA-138 / DSM 3043 / CIP 106854 / NCIMB 13768 / 1H11).